Consider the following 465-residue polypeptide: DEAD-box ATP-dependent RNA helicase 55 (465 aa).

Positions 17-45 (FSELKPPLSEDIIEALDRSGFEVCTPVQA) match the Q motif motif. The Helicase ATP-binding domain maps to 48–219 (IPFLCSHKDV…KAGLRNPYLK (172 aa)). ATP is bound at residue 61 to 68 (AATGSGKT). A DEAD box motif is present at residues 167–170 (DEAD). The Helicase C-terminal domain occupies 228 to 422 (QLVHLLIENK…KDKLQQEKRG (195 aa)). A disordered region spans residues 413 to 465 (KDKLQQEKRGKRKKSSKEAVDDSNKASRKRKLTGRQRQTIQTAQDEEEMNLRL). Positions 428 to 437 (SKEAVDDSNK) are enriched in basic and acidic residues. Positions 456–465 (QDEEEMNLRL) are enriched in acidic residues.

Belongs to the DEAD box helicase family. DDX55/SPB4 subfamily.

The catalysed reaction is ATP + H2O = ADP + phosphate + H(+). In Arabidopsis thaliana (Mouse-ear cress), this protein is DEAD-box ATP-dependent RNA helicase 55 (RH55).